Reading from the N-terminus, the 643-residue chain is MARMLAVRVVAGLAAAAVAALLLEHYGLAGPTTPLPKPRGSQRPHPAPGSEANNIFWGLQISDIHLSRFQDPGRALALEKFCSETIDIIQPALVLATGDLTDAKTKEHLGSRQHEVEWQTYQRILKKTRVMEKTKWLDIKGNHDAYNIPSLESIANYYRKYSAVRKDGAFHHIHSTPFGNYSFISVDATQRPGPKRPYNFFGILDEKQMEELVEFSKKSSQSNQTIWFGHFTTSTIMSPSPGIRTVMGSATAYLCGHLHTLGGLMPVLHTRHFTGTLELEVGDWKDNRRYRIFAFDHDLFSFADVTFDKWPVVLITNPKSLLYSCAKHEPLERLFHSTHIRVLAFSLSPITSVTVKIDGGDIGQASHLSGPIFILKWNPRNYSNGTHTIEVFVQDSAGRSRTAHHIFSAQEDAHLTFDPLASFILLTDHYIVARVLFVLIVLIQLTTLITFRYLAYPELKEPLGFANMTTFSLHILSKINISYYSVLLLTLYTVLGPWFVGEIIDGKLGCCFSFGIFVDGHFLQGGLTFINGIIQLVFFNIPLMAYVCWSLLHRCFGHSFRSHLHQGKYWKIIPVYLLILLLYIWQVYSCYFLHVTYGSLAFTFSPLRTWLTLLTPVLIYRVWTLNSTELGIFMVQLKSHLSS.

Residues 9–29 (VVAGLAAAAVAALLLEHYGLA) traverse the membrane as a helical segment. N-linked (GlcNAc...) asparagine glycosylation is present at Asn180. The next 4 helical transmembrane spans lie at 431 to 451 (IVAR…LITF), 484 to 504 (YSVL…GEII), 532 to 552 (GIIQ…WSLL), and 572 to 592 (IIPV…SCYF).

The protein localises to the membrane. This chain is Transmembrane protein 62 (Tmem62), found in Mus musculus (Mouse).